The primary structure comprises 485 residues: NADH-quinone oxidoreductase subunit N (485 aa).

14 helical membrane passes run 8–28, 35–55, 71–91, 105–125, 127–147, 159–179, 203–223, 235–255, 271–291, 297–317, 326–346, 373–393, 408–430, and 455–475; these read LIAL…MLSI, FLNA…LWFV, GFAM…CTFA, FYLL…ANHL, ALFL…GYAF, YTIL…LVYA, LLAG…LVPF, PAPV…GVVM, VVLG…ALSQ, LLGY…IALQ, VGVY…VVSL, AAVM…LGFI, WWLV…RVAV, and IVVL…QPLI.

The protein belongs to the complex I subunit 2 family. As to quaternary structure, NDH-1 is composed of 13 different subunits. Subunits NuoA, H, J, K, L, M, N constitute the membrane sector of the complex.

It is found in the cell inner membrane. It carries out the reaction a quinone + NADH + 5 H(+)(in) = a quinol + NAD(+) + 4 H(+)(out). In terms of biological role, NDH-1 shuttles electrons from NADH, via FMN and iron-sulfur (Fe-S) centers, to quinones in the respiratory chain. The immediate electron acceptor for the enzyme in this species is believed to be ubiquinone. Couples the redox reaction to proton translocation (for every two electrons transferred, four hydrogen ions are translocated across the cytoplasmic membrane), and thus conserves the redox energy in a proton gradient. This Salmonella typhimurium (strain LT2 / SGSC1412 / ATCC 700720) protein is NADH-quinone oxidoreductase subunit N.